The chain runs to 364 residues: UDP-N-acetylglucosamine--N-acetylmuramyl-(pentapeptide) pyrophosphoryl-undecaprenol N-acetylglucosamine transferase (364 aa).

UDP-N-acetyl-alpha-D-glucosamine-binding positions include 10–12 (TGG), Asn124, Ser195, Ile250, and Gln295.

This sequence belongs to the glycosyltransferase 28 family. MurG subfamily.

Its subcellular location is the cell membrane. The catalysed reaction is di-trans,octa-cis-undecaprenyl diphospho-N-acetyl-alpha-D-muramoyl-L-alanyl-D-glutamyl-meso-2,6-diaminopimeloyl-D-alanyl-D-alanine + UDP-N-acetyl-alpha-D-glucosamine = di-trans,octa-cis-undecaprenyl diphospho-[N-acetyl-alpha-D-glucosaminyl-(1-&gt;4)]-N-acetyl-alpha-D-muramoyl-L-alanyl-D-glutamyl-meso-2,6-diaminopimeloyl-D-alanyl-D-alanine + UDP + H(+). Its pathway is cell wall biogenesis; peptidoglycan biosynthesis. Cell wall formation. Catalyzes the transfer of a GlcNAc subunit on undecaprenyl-pyrophosphoryl-MurNAc-pentapeptide (lipid intermediate I) to form undecaprenyl-pyrophosphoryl-MurNAc-(pentapeptide)GlcNAc (lipid intermediate II). In Bacillus cytotoxicus (strain DSM 22905 / CIP 110041 / 391-98 / NVH 391-98), this protein is UDP-N-acetylglucosamine--N-acetylmuramyl-(pentapeptide) pyrophosphoryl-undecaprenol N-acetylglucosamine transferase.